The sequence spans 677 residues: DNA ligase (677 aa).

Residues 38–42 (DSVYD), 87–88 (SL), and glutamate 119 each bind NAD(+). The active-site N6-AMP-lysine intermediate is the lysine 121. Positions 142, 179, 296, and 320 each coordinate NAD(+). Zn(2+)-binding residues include cysteine 414, cysteine 417, cysteine 432, and cysteine 438. The BRCT domain occupies 595-677 (VVKSEIAGKT…LKLLKSKGVF (83 aa)).

The protein belongs to the NAD-dependent DNA ligase family. LigA subfamily. The cofactor is Mg(2+). Requires Mn(2+) as cofactor.

It carries out the reaction NAD(+) + (deoxyribonucleotide)n-3'-hydroxyl + 5'-phospho-(deoxyribonucleotide)m = (deoxyribonucleotide)n+m + AMP + beta-nicotinamide D-nucleotide.. Functionally, DNA ligase that catalyzes the formation of phosphodiester linkages between 5'-phosphoryl and 3'-hydroxyl groups in double-stranded DNA using NAD as a coenzyme and as the energy source for the reaction. It is essential for DNA replication and repair of damaged DNA. The protein is DNA ligase of Coxiella burnetii (strain CbuG_Q212) (Coxiella burnetii (strain Q212)).